The chain runs to 334 residues: Fructose-1,6-bisphosphatase class 1 (334 aa).

Residues E90, D113, L115, and D116 each contribute to the Mg(2+) site. Substrate is bound by residues 116 to 119 (DGSS), N209, Y242, and K272. Position 278 (E278) interacts with Mg(2+).

This sequence belongs to the FBPase class 1 family. In terms of assembly, homotetramer. The cofactor is Mg(2+).

The protein resides in the cytoplasm. It catalyses the reaction beta-D-fructose 1,6-bisphosphate + H2O = beta-D-fructose 6-phosphate + phosphate. It participates in carbohydrate biosynthesis; gluconeogenesis. The chain is Fructose-1,6-bisphosphatase class 1 from Actinobacillus pleuropneumoniae serotype 7 (strain AP76).